The following is a 97-amino-acid chain: ESAT-6-like protein EsxA (97 aa).

This sequence belongs to the WXG100 family. ESAT-6 subfamily. As to quaternary structure, forms a tight 1:1 complex with EsxB. Forms a complex with EccC and EsxB, probably wholly mediated by EsxB.

Its subcellular location is the secreted. May help regulate assembly and function of the type VII secretion system (T7SS). EsxA disassembles pre-formed EccC-EsxB multimers, possibly by making EccC-EsxA-EsxB trimers instead of EccC-EsxB-EsxB-EccC tetramers. This is ESAT-6-like protein EsxA from Thermomonospora curvata (strain ATCC 19995 / DSM 43183 / JCM 3096 / KCTC 9072 / NBRC 15933 / NCIMB 10081 / Henssen B9).